The following is a 204-amino-acid chain: Secreted phosphoprotein 24 (204 aa).

A signal peptide spans 1 to 23 (MEKRAMRMLAMFVLGTSFWSCAG). Cystine bridges form between Cys86–Cys97 and Cys110–Cys128. Ser90 carries the phosphoserine modification. Phosphoserine occurs at positions 138, 139, 166, and 175. The segment at 179–204 (MRRFPPPGNRSFPNQWPRARTNTGFE) is disordered.

It belongs to the SPP2 family. Post-translationally, multiply phosphorylated at serine residues. Phosphorylation sites are present in the extracellular medium.

The protein resides in the secreted. Functionally, could coordinate an aspect of bone turnover. This chain is Secreted phosphoprotein 24 (SPP2), found in Sus scrofa (Pig).